A 128-amino-acid polypeptide reads, in one-letter code: Large ribosomal subunit protein bL20c (128 aa).

It belongs to the bacterial ribosomal protein bL20 family.

Its subcellular location is the plastid. Functionally, binds directly to 23S ribosomal RNA and is necessary for the in vitro assembly process of the 50S ribosomal subunit. It is not involved in the protein synthesizing functions of that subunit. In Epifagus virginiana (Beechdrops), this protein is Large ribosomal subunit protein bL20c (rpl20).